Reading from the N-terminus, the 405-residue chain is Enoyl-[acyl-carrier-protein] reductase [NADH] (405 aa).

Residues 48–53 (GASSGY), 74–75 (FE), 111–112 (DA), and 140–141 (LA) each bind NAD(+). Position 226 (Tyr226) interacts with substrate. Tyr236 acts as the Proton donor in catalysis. Residues Lys245 and 274–276 (VVT) contribute to the NAD(+) site.

This sequence belongs to the TER reductase family. In terms of assembly, monomer.

The catalysed reaction is a 2,3-saturated acyl-[ACP] + NAD(+) = a (2E)-enoyl-[ACP] + NADH + H(+). It participates in lipid metabolism; fatty acid biosynthesis. Functionally, involved in the final reduction of the elongation cycle of fatty acid synthesis (FAS II). Catalyzes the reduction of a carbon-carbon double bond in an enoyl moiety that is covalently linked to an acyl carrier protein (ACP). The polypeptide is Enoyl-[acyl-carrier-protein] reductase [NADH] (Xanthomonas oryzae pv. oryzae (strain PXO99A)).